Reading from the N-terminus, the 408-residue chain is Beta-ureidopropionase (408 aa).

The 271-residue stretch at 90-360 (VRVGLIQNSI…DGLLISDMDL (271 aa)) folds into the CN hydrolase domain. E137 acts as the Proton acceptor in catalysis. K212 (proton donor) is an active-site residue. Catalysis depends on C249, which acts as the Nucleophile.

Belongs to the carbon-nitrogen hydrolase superfamily. BUP family. Homodimer, homotetramer, homooctamer; can also form higher homooligomers.

Its subcellular location is the cytoplasm. The catalysed reaction is 3-(carbamoylamino)propanoate + H2O + 2 H(+) = beta-alanine + NH4(+) + CO2. It catalyses the reaction 3-(carbamoylamino)-2-methylpropanoate + H2O + 2 H(+) = (R)-3-amino-2-methylpropanoate + NH4(+) + CO2. The protein operates within amino-acid biosynthesis; beta-alanine biosynthesis. Functionally, catalyzes a late step in pyrimidine degradation. Converts N-carbamoyl-beta-aminoisobutyrate and N-carbamoyl-beta-alanine (3-ureidopropanoate) to, respectively, beta-aminoisobutyrate and beta-alanine, ammonia and carbon dioxide. Involved in the recycling of nitrogen from nucleobases to general nitrogen metabolism. This chain is Beta-ureidopropionase, found in Arabidopsis thaliana (Mouse-ear cress).